Reading from the N-terminus, the 79-residue chain is Conotoxin LiCr173 (79 aa).

An N-terminal signal peptide occupies residues 1–20 (MSGLGTMVLTLLLLVFMVTS). Positions 21–46 (HQDGGKKQATQRNAVNIRRRKSITQR) are excised as a propeptide. 3 disulfides stabilise this stretch: Cys52–Cys64, Cys56–Cys73, and Cys63–Cys77. Phe78 is modified (phenylalanine amide).

The protein belongs to the conotoxin O3 superfamily. As to expression, expressed by the venom duct.

It is found in the secreted. The protein is Conotoxin LiCr173 of Conus lividus (Livid cone).